Reading from the N-terminus, the 65-residue chain is Putative cytochrome c oxidase subunit 5C-4 (65 aa).

Residues 20–37 (EIIYGITLGFAVGGLWKM) traverse the membrane as a helical segment.

The protein belongs to the cytochrome c oxidase subunit 5C family.

It is found in the mitochondrion inner membrane. Its function is as follows. This protein is one of the nuclear-coded polypeptide chains of cytochrome c oxidase, the terminal oxidase in mitochondrial electron transport. The polypeptide is Putative cytochrome c oxidase subunit 5C-4 (Arabidopsis thaliana (Mouse-ear cress)).